Here is a 497-residue protein sequence, read N- to C-terminus: ADP-dependent glucokinase (497 aa).

Residues 1–22 (MALWRGSAYAGFLALAVGCVFL) form the signal peptide. Residues 52 to 497 (SPEGRLAAAW…LFYSEVHPHL (446 aa)) enclose the ADPK domain. 3 residues coordinate Mg(2+): glutamate 297, glutamate 328, and aspartate 481. Aspartate 481 acts as the Proton acceptor in catalysis.

This sequence belongs to the ADP-dependent glucokinase family. In terms of assembly, monomer. Mg(2+) serves as cofactor.

Its subcellular location is the secreted. The catalysed reaction is D-glucose + ADP = D-glucose 6-phosphate + AMP + H(+). It participates in carbohydrate degradation; glycolysis. In terms of biological role, catalyzes the phosphorylation of D-glucose to D-glucose 6-phosphate using ADP as the phosphate donor. GDP and CDP can replace ADP, but with reduced efficiency. This Bos taurus (Bovine) protein is ADP-dependent glucokinase (ADPGK).